The primary structure comprises 739 residues: Trehalose phosphorylase (739 aa).

Residues 1–26 constitute a propeptide that is removed on maturation; the sequence is MSTPHHQFESKSSTAIRRRLSSSVSS. Positions 1–28 are disordered; it reads MSTPHHQFESKSSTAIRRRLSSSVSSKQ.

Belongs to the glycosyltransferase group 1 family. Glycosyltransferase 4 subfamily. In terms of assembly, homodimer.

The enzyme catalyses alpha,alpha-trehalose + phosphate = alpha-D-glucose + alpha-D-glucose 1-phosphate. Reversibly catalyzes the synthesis and degradation of trehalose from glucose and alpha-D-glucose 1-phosphate. The equilibrium lies in the direction of trehalose synthesis. This is Trehalose phosphorylase from Pleurotus pulmonarius (Indian oyster mushroom).